Consider the following 464-residue polypeptide: Protein FAM90A12 (464 aa).

3 disordered regions span residues 1–42 (MMAR…DPRL), 70–389 (PATL…HDGA), and 411–437 (APSF…SEAP). Composition is skewed to basic and acidic residues over residues 74–89 (GKKE…KPRA) and 97–114 (NKDK…DPQR). A compositionally biased stretch (low complexity) spans 180–197 (LASLSPLRKASLSSSSSL).

It belongs to the FAM90 family.

In Homo sapiens (Human), this protein is Protein FAM90A12.